Here is a 112-residue protein sequence, read N- to C-terminus: MLIVTTEKVEGKKISKVLGLVRGSTIRAKHVGKDIGASFKNLVGGELTGYNEMLTEARQIAIGRMVEDAEAKGANAVIAFRLSSASVMQGAAEMLAYGTAVVLEDDNSILEK.

The protein belongs to the UPF0145 family.

This is UPF0145 protein CD630_17110 from Clostridioides difficile (strain 630) (Peptoclostridium difficile).